The primary structure comprises 312 residues: GATA transcription factor 6 (312 aa).

3 disordered regions span residues M1–L33, Q56–D77, and K136–L186. Residues Q56–N71 are compositionally biased toward basic and acidic residues. The segment covering V142 to T151 has biased composition (basic residues). The short motif at K143–R150 is the Nuclear localization signal element. Residues S157 to L186 show a composition bias toward low complexity. The GATA-type zinc finger occupies Q217–S271.

The protein belongs to the type IV zinc-finger family. Class A subfamily.

Its subcellular location is the nucleus. Its function is as follows. Transcriptional activator that specifically binds 5'-GATA-3' or 5'-GAT-3' motifs within gene promoters. May be involved in the regulation of some light-responsive genes. The protein is GATA transcription factor 6 (GATA6) of Arabidopsis thaliana (Mouse-ear cress).